The following is a 429-amino-acid chain: 3-phosphoshikimate 1-carboxyvinyltransferase (429 aa).

Residues Lys22, Ser23, and Arg27 each coordinate 3-phosphoshikimate. Lys22 is a binding site for phosphoenolpyruvate. Residues Gly94 and Arg122 each coordinate phosphoenolpyruvate. Ser167, Gln169, Asp315, and Lys342 together coordinate 3-phosphoshikimate. Gln169 contacts phosphoenolpyruvate. The active-site Proton acceptor is Asp315. Residues Arg346 and Arg388 each coordinate phosphoenolpyruvate.

This sequence belongs to the EPSP synthase family. In terms of assembly, monomer.

It is found in the cytoplasm. The enzyme catalyses 3-phosphoshikimate + phosphoenolpyruvate = 5-O-(1-carboxyvinyl)-3-phosphoshikimate + phosphate. The protein operates within metabolic intermediate biosynthesis; chorismate biosynthesis; chorismate from D-erythrose 4-phosphate and phosphoenolpyruvate: step 6/7. Its function is as follows. Catalyzes the transfer of the enolpyruvyl moiety of phosphoenolpyruvate (PEP) to the 5-hydroxyl of shikimate-3-phosphate (S3P) to produce enolpyruvyl shikimate-3-phosphate and inorganic phosphate. This chain is 3-phosphoshikimate 1-carboxyvinyltransferase, found in Geobacter sulfurreducens (strain ATCC 51573 / DSM 12127 / PCA).